We begin with the raw amino-acid sequence, 209 residues long: Amelotin (209 aa).

A signal peptide spans 1 to 16 (MRSTILLFCLLGSTRS). The tract at residues 142-209 (AGANPDVQDG…ATTESANGIQ (68 aa)) is disordered.

This sequence belongs to the amelotin family. Post-translationally, phosphorylated by FAM20C in vitro. In terms of processing, O-glycosylated.

The protein resides in the secreted. In terms of biological role, is a promoter of calcium phosphate mineralization, playing a critical role in the formation of the compact, mineralized, aprismatic enamel surface layer during the maturation stage of amelogenesis. This chain is Amelotin (AMTN), found in Homo sapiens (Human).